A 449-amino-acid polypeptide reads, in one-letter code: Type 3 secretion system ATPase (449 aa).

178–183 (GCGKTT) serves as a coordination point for ATP.

Belongs to the ATPase alpha/beta chains family. T3SS ATPase subfamily. As to quaternary structure, the core secretion machinery of the T3SS is composed of approximately 20 different proteins, including cytoplasmic components, a base, an export apparatus and a needle. This subunit is part of the cytosolic complex. Forms homododecamers. Comprises two hexameric rings that are probably stacked face-to-face by the association of their C-terminal domains. Also present as monomer and homohexamer in solution.

Its subcellular location is the cytoplasm. It catalyses the reaction ATP + H2O + cellular proteinSide 1 = ADP + phosphate + cellular proteinSide 2.. Its activity is regulated as follows. Oligomerization increases ATPase activity. ATPase component of the type III secretion system (T3SS), also called injectisome, which is used to inject bacterial effector proteins into eukaryotic host cells. Acts as a molecular motor to provide the energy that is required for the export of proteins. Required for type III secretion apparatus (T3SA) formation, proper protein secretion, host cell invasion and virulence. May play a critical role in T3SS substrate recognition, disassembly of the effector/chaperone complex and unfolding of the effector in an ATP-dependent manner prior to secretion. This is Type 3 secretion system ATPase from Pseudomonas savastanoi pv. phaseolicola (Pseudomonas syringae pv. phaseolicola).